The sequence spans 456 residues: Methylenetetrahydrofolate--tRNA-(uracil-5-)-methyltransferase TrmFO (456 aa).

Position 9–14 (9–14 (GGGMAG)) interacts with FAD.

This sequence belongs to the MnmG family. TrmFO subfamily. FAD is required as a cofactor.

The protein resides in the cytoplasm. The enzyme catalyses uridine(54) in tRNA + (6R)-5,10-methylene-5,6,7,8-tetrahydrofolate + NADH + H(+) = 5-methyluridine(54) in tRNA + (6S)-5,6,7,8-tetrahydrofolate + NAD(+). The catalysed reaction is uridine(54) in tRNA + (6R)-5,10-methylene-5,6,7,8-tetrahydrofolate + NADPH + H(+) = 5-methyluridine(54) in tRNA + (6S)-5,6,7,8-tetrahydrofolate + NADP(+). In terms of biological role, catalyzes the folate-dependent formation of 5-methyl-uridine at position 54 (M-5-U54) in all tRNAs. The chain is Methylenetetrahydrofolate--tRNA-(uracil-5-)-methyltransferase TrmFO from Novosphingobium aromaticivorans (strain ATCC 700278 / DSM 12444 / CCUG 56034 / CIP 105152 / NBRC 16084 / F199).